A 280-amino-acid polypeptide reads, in one-letter code: 4-hydroxy-tetrahydrodipicolinate reductase (280 aa).

Residues 14-19, Asp-40, 106-108, and 130-133 contribute to the NAD(+) site; these read GAAGRM, ATT, and APSM. His-166 (proton donor/acceptor) is an active-site residue. (S)-2,3,4,5-tetrahydrodipicolinate is bound at residue His-167. The active-site Proton donor is Lys-170. 176–177 lines the (S)-2,3,4,5-tetrahydrodipicolinate pocket; that stretch reads GT.

The protein belongs to the DapB family.

It localises to the cytoplasm. The enzyme catalyses (S)-2,3,4,5-tetrahydrodipicolinate + NAD(+) + H2O = (2S,4S)-4-hydroxy-2,3,4,5-tetrahydrodipicolinate + NADH + H(+). It carries out the reaction (S)-2,3,4,5-tetrahydrodipicolinate + NADP(+) + H2O = (2S,4S)-4-hydroxy-2,3,4,5-tetrahydrodipicolinate + NADPH + H(+). It participates in amino-acid biosynthesis; L-lysine biosynthesis via DAP pathway; (S)-tetrahydrodipicolinate from L-aspartate: step 4/4. Functionally, catalyzes the conversion of 4-hydroxy-tetrahydrodipicolinate (HTPA) to tetrahydrodipicolinate. In Rhodopirellula baltica (strain DSM 10527 / NCIMB 13988 / SH1), this protein is 4-hydroxy-tetrahydrodipicolinate reductase.